A 194-amino-acid polypeptide reads, in one-letter code: Type II restriction enzyme OkrAI (194 aa).

3 residues coordinate Mg(2+): glutamate 71, aspartate 86, and tryptophan 100. The active-site Proton acceptor is the glutamate 101.

Homodimer. Requires Mg(2+) as cofactor.

It carries out the reaction Endonucleolytic cleavage of DNA to give specific double-stranded fragments with terminal 5'-phosphates.. In terms of biological role, a P subtype restriction enzyme that recognizes the double-stranded sequence 5'-GGATCC-3' and cleaves after G-1. This chain is Type II restriction enzyme OkrAI, found in Oceanobacter kriegii (Oceanospirillum kriegii).